The primary structure comprises 396 residues: Acetyl-CoA acetyltransferase (396 aa).

Cysteine 89 (acyl-thioester intermediate) is an active-site residue. CoA-binding positions include 223–225 and serine 249; that span reads RKS. Residues histidine 352 and cysteine 382 each act as proton acceptor in the active site.

The protein belongs to the thiolase-like superfamily. Thiolase family.

It localises to the cytoplasm. The enzyme catalyses 2 acetyl-CoA = acetoacetyl-CoA + CoA. It functions in the pathway lipid metabolism; butanoate metabolism. Functionally, involved in syntrophic growth of S.wolfei with butyrate, as part of the butyrate oxidation pathway. Probably catalyzes the beta-keto thiolysis of acetoacetyl-CoA, leading to 2 acetyl-CoA molecules. This is Acetyl-CoA acetyltransferase from Syntrophomonas wolfei subsp. wolfei (strain DSM 2245B / Goettingen).